The chain runs to 86 residues: Hepcidin-1 (86 aa).

The signal sequence occupies residues methionine 1–alanine 22. Residues valine 23 to phenylalanine 59 constitute a propeptide that is removed on maturation. 4 disulfides stabilise this stretch: cysteine 68-cysteine 84, cysteine 71-cysteine 74, cysteine 72-cysteine 80, and cysteine 75-cysteine 83.

Belongs to the hepcidin family.

The protein resides in the secreted. Seems to act as a signaling molecule involved in the maintenance of iron homeostasis. Seems to be required in conjunction with HFE to regulate both intestinal iron absorption and iron storage in macrophages. May also have antimicrobial activity. The sequence is that of Hepcidin-1 (hamp1) from Salmo salar (Atlantic salmon).